The following is a 1037-amino-acid chain: Probable inorganic carbon transporter subunit DabA 2 (1037 aa).

Zn(2+) contacts are provided by C460, D462, H719, and C734.

It belongs to the inorganic carbon transporter (TC 9.A.2) DabA family. As to quaternary structure, forms a complex with DabB. Zn(2+) is required as a cofactor.

It is found in the cell inner membrane. Functionally, part of an energy-coupled inorganic carbon pump. The chain is Probable inorganic carbon transporter subunit DabA 2 from Nitrobacter winogradskyi (strain ATCC 25391 / DSM 10237 / CIP 104748 / NCIMB 11846 / Nb-255).